The chain runs to 274 residues: Merozoite surface protein 2 (274 aa).

The first 20 residues, 1–20 (MKVIKTLSIINFFIFVTFNI), serve as a signal peptide directing secretion. Residues Asn22 and Asn36 are each glycosylated (N-linked (GlcNAc...) asparagine). Positions 43–234 (MAESKPPTGT…SDSQKECTDG (192 aa)) are disordered. A polymorphic region region spans residues 44–200 (AESKPPTGTG…EQTESPELQS (157 aa)). 2 tandem repeats follow at residues 53-62 (GASGSAGSGA) and 63-72 (GASGSAGSGD). A 2 X 10 AA tandem repeats of G-A-S-G-S-A-G-S-G-[AD] region spans residues 53–72 (GASGSAGSGAGASGSAGSGD). Over residues 53-72 (GASGSAGSGAGASGSAGSGD) the composition is skewed to gly residues. Residues 91 to 121 (SSSTPATTTTTTTTTTTTTTNDAEASTSTSS) are compositionally biased toward low complexity. 3 stretches are compositionally biased toward polar residues: residues 122–131 (ENPNHNNAET), 140–167 (QKSNQANKETQNNSNVQQDSQTKSNVPP), and 174–202 (KSPTAQPEQAENSAPTAEQTESPELQSAP). The N-linked (GlcNAc...) asparagine glycan is linked to Asn151. Asn223 carries N-linked (GlcNAc...) asparagine glycosylation. Residues Cys231 and Cys239 are joined by a disulfide bond. Residue Asn248 is glycosylated (N-linked (GlcNAc...) asparagine). Asn248 carries GPI-anchor amidated asparagine lipidation. The propeptide at 249–274 (SSNIASINKFVVLISAKLVLSFAIFI) is removed in mature form.

The protein localises to the cell membrane. Functionally, may play a role in the merozoite attachment to the erythrocyte. The chain is Merozoite surface protein 2 from Plasmodium falciparum (isolate kf1916).